A 2050-amino-acid chain; its full sequence is Unconventional myosin-XVIIIa (2050 aa).

2 stretches are compositionally biased toward basic and acidic residues: residues 1–17 and 23–34; these read MFNL…GRKE and EKKERMSAAELR. The tract at residues 1-34 is disordered; it reads MFNLMKKDKDKDGGRKEKKEKKEKKERMSAAELR. Positions 1–398 are mediates nucleotide-independent binding to F-actin and interaction with GOLPH3; it reads MFNLMKKDKD…LDVDEDDIEK (398 aa). Residues Ser35, Ser52, Ser72, and Ser74 each carry the phosphoserine modification. A Phosphothreonine modification is found at Thr79. Phosphoserine is present on residues Ser83 and Ser98. Position 99 is a phosphothreonine (Thr99). Residues Ser102 and Ser103 each carry the phosphoserine modification. The short motif at 114 to 118 is the Interaction with actin element; it reads RGSVL. Phosphoserine is present on residues Ser140, Ser145, Ser157, Ser160, Ser164, Ser234, and Ile340. The disordered stretch occupies residues 140 to 167; the sequence is SFSQRSRDESASETSTPSEHSAAPSPQV. One can recognise a PDZ domain in the interval 220–311; that stretch reads ELELQRRPTG…SVRLKVQPIP (92 aa). A Myosin N-terminal SH3-like domain is found at 349 to 401; it reads TEKVWLVHRDGFSLASQLKSEELSLPEGKARVKLDHDGAILDVDEDDIEKANA. The Myosin motor domain maps to 405 to 1181; it reads DRLEDLASLV…TLARLEEQRD (777 aa). 498–505 provides a ligand contact to ATP; the sequence is GSSGSGKT. Phosphoserine is present on residues Ser983, Ser1063, Ser1064, and Ser1066. The disordered stretch occupies residues 1051-1071; that stretch reads PGEPRSASSRRVSSSSELDLP. Low complexity predominate over residues 1055–1066; it reads RSASSRRVSSSS. The IQ domain occupies 1184–1213; it reads TSRHLTLFQAACRGYLARQHFKKRKIQDLA. A coiled-coil region spans residues 1242–1967; that stretch reads LIQVQLSEEQ…KKNKLEGDSD (726 aa). Positions 1448–1477 are disordered; sequence RNHELEKKQRRFDSELSQAHEETQREKLQR. Ser1636 is modified (phosphoserine). Residues 1848-1897 form a disordered region; it reads MEKLTEERDQRAAAENREKEQNKRLQRQLRDTKEEMSELARKEAEASRKK. Phosphoserine is present on residues Ser1938, Ser1966, Ser1970, Ser1994, Ser1998, Ser2002, Ser2003, Ser2016, Ser2032, Ser2037, and Ser2039. The tract at residues 1955 to 2050 is disordered; sequence YQKKKNKLEG…TEAKLTETSA (96 aa). Thr2041 carries the phosphothreonine modification. Residues 2041 to 2050 are compositionally biased toward basic and acidic residues; sequence TEAKLTETSA.

The protein belongs to the TRAFAC class myosin-kinesin ATPase superfamily. Myosin family. Homodimer. Forms a tripartite complex with CDC42BPA/CDC42BPB and LURAP1 with the latter acting as an adapter connecting CDC42BPA/CDC42BPB and MYO18A. Binds F-actin; regulated by ADP and GOLPH3. Interacts with GOLPH3; the interaction is direct and may link Golgi membranes to the actin cytoskeleton. Interacts with JAK3. Interacts with MSR1 and CD14. Phosphorylated on tyrosine upon CSF1R activation. Isoform 6 is phosphorylated on Ser-340. As to expression, isoform 1; Expressed ubiquitously. Isoform 2: Specifically expressed in most hematopoietic cells. Isoform 3: Predominantly expressed in alveolar macrophages.

It is found in the golgi apparatus. The protein localises to the trans-Golgi network. The protein resides in the golgi outpost. It localises to the cytoplasm. Its subcellular location is the cytoskeleton. It is found in the microtubule organizing center. The protein localises to the endoplasmic reticulum-Golgi intermediate compartment. Its function is as follows. May link Golgi membranes to the cytoskeleton and participate in the tensile force required for vesicle budding from the Golgi. Thereby, may play a role in Golgi membrane trafficking and could indirectly give its flattened shape to the Golgi apparatus. Alternatively, in concert with LURAP1 and CDC42BPA/CDC42BPB, has been involved in modulating lamellar actomyosin retrograde flow that is crucial to cell protrusion and migration. May be involved in the maintenance of the stromal cell architectures required for cell to cell contact. Regulates trafficking, expression, and activation of innate immune receptors on macrophages. Plays a role to suppress inflammatory responsiveness of macrophages via a mechanism that modulates CD14 trafficking. Acts as a receptor of surfactant-associated protein A (SFTPA1/SP-A) and plays an important role in internalization and clearance of SFTPA1-opsonized S.aureus by alveolar macrophages. Strongly enhances natural killer cell cytotoxicity. This chain is Unconventional myosin-XVIIIa (Myo18a), found in Mus musculus (Mouse).